The chain runs to 259 residues: Phosphate import ATP-binding protein PstB (259 aa).

Positions 2-248 (GQRIDVNHEN…ITMFNNPQNE (247 aa)) constitute an ABC transporter domain. 37 to 44 (GPSGCGKS) lines the ATP pocket.

The protein belongs to the ABC transporter superfamily. Phosphate importer (TC 3.A.1.7) family. The complex is composed of two ATP-binding proteins (PstB), two transmembrane proteins (PstC and PstA) and a solute-binding protein (PstS).

The protein localises to the cell membrane. The enzyme catalyses phosphate(out) + ATP + H2O = ADP + 2 phosphate(in) + H(+). In terms of biological role, part of the ABC transporter complex PstSACB involved in phosphate import. Responsible for energy coupling to the transport system. This is Phosphate import ATP-binding protein PstB from Bifidobacterium longum (strain NCC 2705).